Consider the following 38-residue polypeptide: MKVSSSVGKRCESCKIIRRKGKIYVICKKNPNHKQRQG.

It belongs to the bacterial ribosomal protein bL36 family.

In Chloroherpeton thalassium (strain ATCC 35110 / GB-78), this protein is Large ribosomal subunit protein bL36.